Reading from the N-terminus, the 296-residue chain is MIISEKVKKALEDGIPVIALESTVIAHGLPYPHNVETAKMLEEMALENGVVPATIGILKGEIIVGMSQEQINEMLADEPLKIGTREIPYAVGMKKSAATTVSATMRIAKIAGIDVFATGGIGGVHIGDWDVSQDITEMAKSDVIVVSAGCKSILDVKKTIEFLETFQVTVVGYKTNKFPIFYEGLSDFNLEHRVDSPEDIAKIFRAKKSLGIEGALLVANPIPQEFVISEQEVDGYMKQALSECFEKGITGKAVTPYLLSRIAQLSNGKTLTSNIELLKNNVLLACQIAKSLKTMA.

Catalysis depends on E21, which acts as the Proton donor. Residues K81 and V101 each coordinate substrate. Residue D130 coordinates Mn(2+). Position 132-134 (132-134 (SQD)) interacts with substrate. K151 acts as the Nucleophile in catalysis.

Belongs to the pseudouridine-5'-phosphate glycosidase family. Homotrimer. Mn(2+) serves as cofactor.

The catalysed reaction is D-ribose 5-phosphate + uracil = psi-UMP + H2O. In terms of biological role, catalyzes the reversible cleavage of pseudouridine 5'-phosphate (PsiMP) to ribose 5-phosphate and uracil. Functions biologically in the cleavage direction, as part of a pseudouridine degradation pathway. This chain is Pseudouridine-5'-phosphate glycosidase, found in Fervidobacterium nodosum (strain ATCC 35602 / DSM 5306 / Rt17-B1).